The following is a 448-amino-acid chain: Elongation factor 1-alpha (448 aa).

Residues 5–230 enclose the tr-type G domain; the sequence is KIHISIVVIG…DQINEPKRPS (226 aa). The tract at residues 14-21 is G1; the sequence is GHVDSGKS. 14 to 21 lines the GTP pocket; it reads GHVDSGKS. K55 is subject to N6,N6-dimethyllysine. Residues 70-74 form a G2 region; the sequence is GITID. Residue K79 is modified to N6,N6,N6-trimethyllysine. Positions 91-94 are G3; sequence DAPG. Residues 91–95 and 153–156 each bind GTP; these read DAPGH and NKMD. Residues 153 to 156 form a G4 region; sequence NKMD. K187 carries the N6,N6,N6-trimethyllysine modification. A G5 region spans residues 194–196; sequence SGF. The residue at position 261 (K261) is an N6-methyllysine. E289 carries the 5-glutamyl glycerylphosphorylethanolamine modification. At K306 the chain carries N6,N6,N6-trimethyllysine. E362 is subject to 5-glutamyl glycerylphosphorylethanolamine. N6,N6,N6-trimethyllysine is present on K396.

The protein belongs to the TRAFAC class translation factor GTPase superfamily. Classic translation factor GTPase family. EF-Tu/EF-1A subfamily.

The protein resides in the cytoplasm. This protein promotes the GTP-dependent binding of aminoacyl-tRNA to the A-site of ribosomes during protein biosynthesis. The polypeptide is Elongation factor 1-alpha (Solanum lycopersicum (Tomato)).